The chain runs to 1578 residues: FH1/FH2 domain-containing protein 3 (1578 aa).

One can recognise a GBD/FH3 domain in the interval 18–405 (NSTNFPEPSR…DLCEKDEEEE (388 aa)). Disordered stretches follow at residues 324–518 (HEDG…DKLP), 535–824 (SPLL…GVNG), 915–942 (VGRG…KTES), 979–1013 (LGHR…VPPP), 1418–1462 (QQKQ…YAED), 1490–1514 (RTRS…PSVT), and 1528–1565 (SATQ…PEEA). 2 positions are modified to phosphoserine: serine 345 and serine 376. Residues 368–383 (IQNIKSPLSAPTSPCS) are compositionally biased toward polar residues. Residues 399–425 (EKDEEEEEEEEQPITEPNSEEEREDDA) are compositionally biased toward acidic residues. The residue at position 413 (threonine 413) is a Phosphothreonine. Over residues 434 to 446 (ASSASGQSSPGKD) the composition is skewed to low complexity. Residues 453–473 (ALHTTSSPTSQGRWLSASTAA) show a composition bias toward polar residues. The span at 553–583 (SNFSSNSFQSSRPSPGPSGSPSYASSFSSPQ) shows a compositional bias: low complexity. The span at 584–598 (DTRSSPSGLLTSSFR) shows a compositional bias: polar residues. Residues 597-645 (FRQHQESLAAERERRRQEREERLQRIEREERNKFNREYLDKREEQRQAR) are a coiled coil. A compositionally biased stretch (basic and acidic residues) spans 599–651 (QHQESLAAERERRRQEREERLQRIEREERNKFNREYLDKREEQRQARGERYKY). 2 stretches are compositionally biased toward low complexity: residues 675–684 (DLSLDLSLPA) and 692–701 (SSQSPSADSQ). The span at 751-761 (SQEEPVLELEP) shows a compositional bias: acidic residues. Basic and acidic residues predominate over residues 762 to 782 (EERASLSEKERQNEEVNERDN). Residues 784–793 (SASSISSSSS) show a composition bias toward low complexity. Residues 795–809 (LEREEKEDKLSEDRA) show a composition bias toward basic and acidic residues. Serine 921 is modified (phosphoserine). The residue at position 933 (threonine 933) is a Phosphothreonine. Pro residues predominate over residues 985-1013 (PGPPPPPPPTFLGLPPPPPPPLLDSVPPP). The region spanning 985 to 1016 (PGPPPPPPPTFLGLPPPPPPPLLDSVPPPPVP) is the FH1 domain. One can recognise an FH2 domain in the interval 1039-1435 (GQPAFTKKKK…HRERNKTRGK (397 aa)). Basic residues predominate over residues 1420–1434 (KQKRANHRERNKTRG). The span at 1444 to 1456 (SGSSPAAPSQPQG) shows a compositional bias: low complexity. The DAD domain occupies 1515-1547 (DDAADEIMDRIVKSATQVPSQRVVPRERKRSRA). Residues 1541–1556 (ERKRSRANRKSLRRTL) are compositionally biased toward basic residues.

The protein belongs to the formin homology family. As to quaternary structure, interacts with nestin/NES-based interfilament (IF). Interacts with SQSTM1. As to expression, expressed in the heart, including left ventricle, kidney, brain and skeletal muscle, including soleus and tibialis anterior (at protein level).

It localises to the cytoplasm. Its subcellular location is the cytoskeleton. It is found in the myofibril. The protein localises to the sarcomere. The protein resides in the z line. May play a role in actin filament polymerization in cardiomyocytes. Actin-organizing protein that may cause stress fiber formation together with cell elongation. This Mus musculus (Mouse) protein is FH1/FH2 domain-containing protein 3 (Fhod3).